Consider the following 272-residue polypeptide: Large ribosomal subunit protein uL2 (272 aa).

The disordered stretch occupies residues 222 to 272 (GTAMNPVDHPHGGGEGRNFGKHPVSPWGKKTKGKKTRNNRLTDKFIVHRRS). A compositionally biased stretch (basic residues) spans 250–259 (KKTKGKKTRN). A compositionally biased stretch (basic and acidic residues) spans 261–272 (RLTDKFIVHRRS).

This sequence belongs to the universal ribosomal protein uL2 family. Part of the 50S ribosomal subunit. Forms a bridge to the 30S subunit in the 70S ribosome.

Functionally, one of the primary rRNA binding proteins. Required for association of the 30S and 50S subunits to form the 70S ribosome, for tRNA binding and peptide bond formation. It has been suggested to have peptidyltransferase activity; this is somewhat controversial. Makes several contacts with the 16S rRNA in the 70S ribosome. The chain is Large ribosomal subunit protein uL2 from Baumannia cicadellinicola subsp. Homalodisca coagulata.